The primary structure comprises 213 residues: MRSKYIVIEGLEGAGKTTARNVVVETLEQLGIRDMVFTREPGGTQLAEKLRSLVLDIKSVGDEVITDKAEVLMFYAARVQLVETVIKPALANGTWVIGDRHDLSTQAYQGGGRGIDQHMLATLRDAVLGDFRPDLTLYLDVTPEVGLKRARARGELDRIEQESFDFFNRTRARYLELAAQDKSIHTIDATQPLEAVMDAIRTTVTHWVKELDA.

ATP is bound at residue 10-17 (GLEGAGKT).

It belongs to the thymidylate kinase family.

It catalyses the reaction dTMP + ATP = dTDP + ADP. In terms of biological role, phosphorylation of dTMP to form dTDP in both de novo and salvage pathways of dTTP synthesis. This Shigella boydii serotype 18 (strain CDC 3083-94 / BS512) protein is Thymidylate kinase.